The chain runs to 205 residues: Pyrrolidone-carboxylate peptidase (205 aa).

Active-site residues include E78, C141, and H165.

This sequence belongs to the peptidase C15 family. Homotetramer.

The protein resides in the cytoplasm. The enzyme catalyses Release of an N-terminal pyroglutamyl group from a polypeptide, the second amino acid generally not being Pro.. Functionally, removes 5-oxoproline from various penultimate amino acid residues except L-proline. The chain is Pyrrolidone-carboxylate peptidase from Thermosipho africanus (strain TCF52B).